Consider the following 415-residue polypeptide: Amino acid decarboxylase lolD2 (415 aa).

Lys62 carries the post-translational modification N6-(pyridoxal phosphate)lysine. Pyridoxal 5'-phosphate contacts are provided by residues Ser194, Gly231, and 266-269 (EPGT). 315 to 316 (IV) is a substrate binding site. Cys351 serves as the catalytic Proton donor; shared with dimeric partner. Cys351 is modified (S-nitrosocysteine). A substrate-binding site is contributed by Asp352. Pyridoxal 5'-phosphate is bound at residue Tyr381.

This sequence belongs to the Orn/Lys/Arg decarboxylase class-II family. As to quaternary structure, homodimer. Pyridoxal 5'-phosphate is required as a cofactor.

It functions in the pathway alkaloid biosynthesis. Its function is as follows. Amino acid decarboxylase; part of the gene cluster that mediates the biosynthesis of loline alkaloids, potent insecticidal agents composed of a pyrrolizidine ring system and an uncommon ether bridge linking carbons 2 and 7. Lolines are structurally differentiated by the various modifications of the L-amino group and include norloline, loline, N-methylloline, N-acetylloline, N-acetylnorloline, and N-formylloline. The first committed step is the condensation of O-acetyl-L-homoserine (derived from L-aspartic acid) and L-proline, probably catalyzed by the gamma-type pyridoxal 5'-phosphate(PLP)-dependent enzyme lolC, to give the diamino diacid, NACPP. Ensuing cyclization, decarboxylation, and acetylation steps yield 1-exo-acetamidopyrrolizidine (AcAP). LolO is required for installation of the ether bridge upon the pathway intermediate, 1-exo-acetamidopyrrolizidine (AcAP). In sequential 2-oxoglutarate- and O(2)-consuming steps, lolO removes hydrogens from C2 and C7 of AcAP to form both carbon-oxygen bonds in N-acetylnorloline (NANL), the precursor to all other lolines. The enzymes lolD, lolE, lolF and lolT have also been proposed to be involved in the ether-bridge installation. Further processing of the exocyclic moiety of NANL by fungal N-acetamidase (LolN), methyltransferase (LolM), and cytochrome P450 (LolP) enzymes, with occasional involvement of a plant acetyltransferase, generates the other known lolines. LolN transforms NANL to norlonine which is monomethylated and dimethylated to respectively lonine and N-methyllonine (NML) by lolM. LolP catalyzes hydroxylation of the methyl group in N-methylloline (NML) and further oxygenation to N-formylloline (NFL). A plant acetyltransferase is responsible for the acetylation of loline to form N-acetylloline (NAL). LolA might interact with aspartate kinase to prevent feedback inhibition of its activity by these end products and thereby promote production of L-homoserine from L-aspartate. The protein is Amino acid decarboxylase lolD2 of Epichloe uncinata (Endophyte fungus).